We begin with the raw amino-acid sequence, 299 residues long: tRNA dimethylallyltransferase (299 aa).

An ATP-binding site is contributed by 11–18 (GPTAVGKT). 13-18 (TAVGKT) is a substrate binding site. Positions 36–39 (DSQQ) are interaction with substrate tRNA.

The protein belongs to the IPP transferase family. As to quaternary structure, monomer. Mg(2+) serves as cofactor.

The enzyme catalyses adenosine(37) in tRNA + dimethylallyl diphosphate = N(6)-dimethylallyladenosine(37) in tRNA + diphosphate. Functionally, catalyzes the transfer of a dimethylallyl group onto the adenine at position 37 in tRNAs that read codons beginning with uridine, leading to the formation of N6-(dimethylallyl)adenosine (i(6)A). The protein is tRNA dimethylallyltransferase of Streptococcus pyogenes serotype M12 (strain MGAS2096).